Consider the following 413-residue polypeptide: Serine/threonine transporter SstT (413 aa).

9 helical membrane-spanning segments follow: residues 15–35 (NIVI…TLAP), 48–68 (FVSA…AASI), 82–102 (VIVL…VMSF), 141–161 (ALMT…GLGL), 178–198 (CISA…FGLV), 216–236 (LLAV…PLIV), 290–310 (IPLG…VLTL), 330–350 (LVAA…LLLI), and 357–377 (FGIS…IGVV).

This sequence belongs to the dicarboxylate/amino acid:cation symporter (DAACS) (TC 2.A.23) family.

The protein resides in the cell inner membrane. It catalyses the reaction L-serine(in) + Na(+)(in) = L-serine(out) + Na(+)(out). The catalysed reaction is L-threonine(in) + Na(+)(in) = L-threonine(out) + Na(+)(out). Its function is as follows. Involved in the import of serine and threonine into the cell, with the concomitant import of sodium (symport system). This chain is Serine/threonine transporter SstT, found in Aliivibrio fischeri (strain ATCC 700601 / ES114) (Vibrio fischeri).